We begin with the raw amino-acid sequence, 246 residues long: Probable transcriptional regulatory protein COSY_0365 (246 aa).

This sequence belongs to the TACO1 family.

It localises to the cytoplasm. The protein is Probable transcriptional regulatory protein COSY_0365 of Vesicomyosocius okutanii subsp. Calyptogena okutanii (strain HA).